Consider the following 336-residue polypeptide: Glutamyl endopeptidase (336 aa).

Positions Met-1–Ala-29 are cleaved as a signal peptide. Positions Leu-30 to Asn-68 are excised as a propeptide. Positions Ala-34–Leu-61 are disordered. Residues Pro-39–Lys-51 show a composition bias toward low complexity. Residues His-119, Asp-161, and Ser-237 each act as charge relay system in the active site. The segment at Phe-283–Ala-336 is disordered. The segment covering Asp-286–Ala-336 has biased composition (low complexity). Repeat copies occupy residues Pro-289–Asn-291, Pro-292–Asn-294, Pro-295–Asn-297, Pro-298–Asn-300, Pro-301–Asn-303, Pro-304–Asn-306, Pro-310–Asn-312, Pro-313–Asn-315, Pro-316–Asn-318, Pro-319–Asn-321, and Pro-322–Asn-324. The tract at residues Pro-289–Asn-324 is 11 X 3 AA repeats of P-[DN]-N.

This sequence belongs to the peptidase S1B family. Proteolytically cleaved by aureolysin (aur). This cleavage leads to the activation of SspA.

The protein resides in the secreted. The catalysed reaction is Preferential cleavage: Glu-|-Xaa, Asp-|-Xaa.. Its function is as follows. Preferentially cleaves peptide bonds on the carboxyl-terminal side of aspartate and glutamate. Along with other extracellular proteases it is involved in colonization and infection of human tissues. Required for proteolytic maturation of thiol protease SspB and inactivation of SspC, an inhibitor of SspB. It is the most important protease for degradation of fibronectin-binding protein (FnBP) and surface protein A, which are involved in adherence to host cells. May also protect bacteria against host defense mechanism by cleaving the immunoglobulin classes IgG, IgA and IgM. May be involved in the stability of secreted lipases. This Staphylococcus aureus (strain NCTC 8325 / PS 47) protein is Glutamyl endopeptidase (sspA).